A 137-amino-acid chain; its full sequence is Ribonuclease VapC3 (137 aa).

Positions 12-129 (VVVDASAMVD…LTTDERLARA (118 aa)) constitute a PINc domain. Mg(2+) is bound by residues D15 and D105.

This sequence belongs to the PINc/VapC protein family. It depends on Mg(2+) as a cofactor.

In terms of biological role, toxic component of a type II toxin-antitoxin (TA) system. An RNase. Its toxic effect is neutralized by coexpression with cognate antitoxin VapB3. The polypeptide is Ribonuclease VapC3 (Mycobacterium tuberculosis (strain CDC 1551 / Oshkosh)).